The primary structure comprises 1098 residues: MLNGLTRVSTSSELESILDIVQSSGEIAVVFISPSIGDLETITSETQRRQLRIAGIPRGGYTILPAIPLYDDELLQMCERYTAANDYEKAQIRDSLFMREYPLFAYSVRNHKALFHPADYVSRILQFCSYYVQAPDADVLSLLDRSPFLHISPIKEICTHIRLIARGTPLAPEDSESPAPEQLRFHAESDAEKLAAERAGAMSIATSSGGASETEQLSLFSGVVPSALFQKDAVEEVDKDTEETMVDLTGEETVDAVHSFQAEYLTLDGLELVTKAAIFYDREGEGQRIVAVYIPGGVPEDTCRAAAAVLEPAATKKNLRALTNGGLPPDTGLVGYYDYLTNPTRHKCRETEFSRRNWGLLAQSEPLLKHLDKLYSQLAPMHHHLQKVAIPSQYQLCGTVFSTITVNRNFRTAVHTDKGDFRSGLGVLSVINGEFEGCHLAIKKLKKAFQLKVGDVLLFDTSLEHGNTEVINPEIHWQRTSIVCYLRTGLMSSVCEMERRKHLNRLILQQLRNTEVLNTTVNINGADSSLPPLFVPTRLASHLAPVQLAALGFIVERTEKQSGCVVAMTMGLGKTLVALTLCFSQLHLAPQADILILTPKPIISHWVDEKNKWAMHGLHFPHFVASDGLNSLEFEQQLLEYERQKNNEKPKLGHVFVINGEYLAGFLRRFKRFTPLLIIVDEGHRVAAKGNKLTESLDRLRCNLRIVLSGTPLQNDASELYRLVGWVNKGVGRVLPPKRFQELANDINQFVEGDDGAFYNAVMAQEYIQDWMRGFVFREMENDLPPLHDYLLICGSSDVQREYEEKLGLTETTMTALKATEHRPHHLSTHPACYLAFISDSYQSMVSGWTVRAQANTSRMRVSQLEEIDTMRLEHYVQMVENEQLDTFIDLSGKMRVLVDIVLRVQARKEKLIIFSLYVGSQDLIHRTLTALRVCTFTVRGRDSQDRRRRAMQEFSENKDLIVLVLSTKIAAYGLDFTAANHVVLFDSWWNPQVDAQAIARAYRRNQRKPVTVYRLISATENKFVLSSQTRKIALFKCILHERTSRQALPDELEDCAANEKDEERRSFWAKLKTTLLAGGTRALLNVYRYQESVRESE.

The segment at 1-540 is thymine dioxygenase; sequence MLNGLTRVST…PPLFVPTRLA (540 aa). His-415, Asp-417, and His-465 together coordinate Fe cation. Residue Arg-479 participates in 2-oxoglutarate binding. Positions 541 to 1098 are DNA Helicase; that stretch reads SHLAPVQLAA…RYQESVRESE (558 aa). A Helicase ATP-binding domain is found at 555–730; that stretch reads VERTEKQSGC…YRLVGWVNKG (176 aa). An ATP-binding site is contributed by 568–575; it reads MTMGLGKT. The short motif at 681–684 is the DEAH box element; it reads DEGH. One can recognise a Helicase C-terminal domain in the interval 897–1057; the sequence is VLVDIVLRVQ…ALPDELEDCA (161 aa).

It in the C-terminal section; belongs to the SNF2/RAD54 helicase family. The protein in the N-terminal section; belongs to the TET family. JBP2 subfamily. It depends on Fe(2+) as a cofactor.

The protein localises to the nucleus. The enzyme catalyses ATP + H2O = ADP + phosphate + H(+). It carries out the reaction thymine + 2-oxoglutarate + O2 = 5-hydroxymethyluracil + succinate + CO2. Its function is as follows. Dioxygenase that catalyzes the first step of DNA base J (beta-d-glucosyl-HOMedU) biosynthesis by converting thymine to 5-hydroxymethyluracil (HOMedU). DNA base J is a hypermodified thymidine residue found in the genome of kinetoplastid parasites, which is localized primarily to repetitive DNA, namely the telomeres, and is implicated in the regulation of antigenic variation. Probably also acts as a DNA helicase. Recognizes and binds specific regions of the genome, hydrolyzes ATP and allows the DNA base J de novo synthesis. Involved in initial synthesis of DNA base J, JBP1 being able to act via the basal level of DNA base J and propagate further synthesis. In contrast to JBP1, it does not specifically bind DNA base J, however it binds chromatin. This is Bifunctional helicase and thymine dioxygenase JBP2 (JBP2) from Leishmania tarentolae (Sauroleishmania tarentolae).